A 168-amino-acid polypeptide reads, in one-letter code: Small ribosomal subunit protein uS5 (168 aa).

In terms of domain architecture, S5 DRBM spans 12-75 (YQEKLVSVTR…DQAKKNMVYI (64 aa)).

It belongs to the universal ribosomal protein uS5 family. As to quaternary structure, part of the 30S ribosomal subunit. Contacts proteins S4 and S8.

With S4 and S12 plays an important role in translational accuracy. Its function is as follows. Located at the back of the 30S subunit body where it stabilizes the conformation of the head with respect to the body. This Legionella pneumophila (strain Paris) protein is Small ribosomal subunit protein uS5.